The primary structure comprises 125 residues: Fumarate reductase subunit D (125 aa).

3 helical membrane-spanning segments follow: residues valine 29 to tryptophan 49, asparagine 64 to histidine 84, and valine 102 to leucine 122.

This sequence belongs to the FrdD family. In terms of assembly, part of an enzyme complex containing four subunits: a flavoprotein (FrdA), an iron-sulfur protein (FrdB), and two hydrophobic anchor proteins (FrdC and FrdD).

It localises to the cell membrane. Functionally, anchors the catalytic components of the fumarate reductase complex to the cell membrane, binds quinones. This chain is Fumarate reductase subunit D, found in Mycobacterium bovis (strain BCG / Tokyo 172 / ATCC 35737 / TMC 1019).